The chain runs to 166 residues: Ribosome maturation factor RimM (166 aa).

One can recognise a PRC barrel domain in the interval 92–164 (EGVYYDFQLI…KIIIDPIPGL (73 aa)).

The protein belongs to the RimM family. As to quaternary structure, binds ribosomal protein uS19.

It localises to the cytoplasm. Its function is as follows. An accessory protein needed during the final step in the assembly of 30S ribosomal subunit, possibly for assembly of the head region. Essential for efficient processing of 16S rRNA. May be needed both before and after RbfA during the maturation of 16S rRNA. It has affinity for free ribosomal 30S subunits but not for 70S ribosomes. The chain is Ribosome maturation factor RimM from Dehalococcoides mccartyi (strain CBDB1).